Reading from the N-terminus, the 185-residue chain is Elongation factor P (185 aa).

This sequence belongs to the elongation factor P family.

The protein localises to the cytoplasm. The protein operates within protein biosynthesis; polypeptide chain elongation. Its function is as follows. Involved in peptide bond synthesis. Stimulates efficient translation and peptide-bond synthesis on native or reconstituted 70S ribosomes in vitro. Probably functions indirectly by altering the affinity of the ribosome for aminoacyl-tRNA, thus increasing their reactivity as acceptors for peptidyl transferase. The sequence is that of Elongation factor P from Streptococcus pyogenes serotype M28 (strain MGAS6180).